A 375-amino-acid polypeptide reads, in one-letter code: ATP-sensitive inward rectifier potassium channel 15 (375 aa).

At 1–60 the chain is on the cytoplasmic side; the sequence is MDAIHLGMSSAPLVKHTNGVGLKAHRPRVMSKSGHSNVRIDKVDGIYLLYLQDLWTTVID. A helical membrane pass occupies residues 61-87; the sequence is MKWRYKLTLFAATFVMTWFLFGVVYYA. Residues 88-113 are Extracellular-facing; sequence IAFIHGDLQLGESNSNHTPCIMKVDS. An intramembrane region (helical; Pore-forming) is located at residues 114–130; sequence LTGAFLFSLESQTTIGY. The Selectivity filter motif lies at 127-132; sequence TIGYGV. Residues 131 to 139 are Extracellular-facing; it reads GVRSITEEC. A helical membrane pass occupies residues 140-165; it reads PHAIFLLVAQLVITTLIEIFITGTFL. Residues 166–375 lie on the Cytoplasmic side of the membrane; that stretch reads AKIARPKKRA…RSLLLQQSNV (210 aa).

The protein belongs to the inward rectifier-type potassium channel (TC 1.A.2.1) family. KCNJ15 subfamily. As to quaternary structure, can form heteromultimeric channels with Kir5.1/KCNJ16. Interacts with PATJ. In terms of tissue distribution, expressed in the proximal segment of the nephron.

It is found in the membrane. The protein localises to the cell membrane. The catalysed reaction is K(+)(in) = K(+)(out). Channel activity is regulated by variations of cytosolic pH; reversibly inhibited by acidic pH values. Inhibited by Ba(2+) and Cs(+) in a voltage-dependent manner. Inward rectifier potassium channels are characterized by a greater tendency to allow potassium to flow into the cell rather than out of it. Their voltage dependence is regulated by the concentration of extracellular potassium; as external potassium is raised, the voltage range of the channel opening shifts to more positive voltages. The inward rectification is mainly due to the blockage of outward current by internal magnesium. This chain is ATP-sensitive inward rectifier potassium channel 15 (Kcnj15), found in Mus musculus (Mouse).